A 321-amino-acid polypeptide reads, in one-letter code: MQYKKETLLLILLAILLALTQRYSRTKDHLQKMYTCWRDHLEEPQLESWFNPKKRPDVIATTGWLAPVLWEGTYDREVLEQYYKRLNITVGLAVFATGNFSSESLRRFIKSANKYFMVGYNVIFYILADGTSNLPYLELGPLRTLKMWRLSGEEMTYEDSNLRNMNNMRYKIMEHIQYEVNFLFVMTANQIIKNHFGVETLGRSVAQLHAWWYFKQPREFPYERRRKASAFIAFEEGDFYYHSAIVGGTPLDVLDLIEHYIKGIIDDRTNELSSTYERHLNKYFFIKKPVRVLSPEYNWDPRFKTPPEIWHIKVAWQPRIT.

Residues 1–6 (MQYKKE) are Cytoplasmic-facing. The helical; Signal-anchor for type II membrane protein transmembrane segment at 7–24 (TLLLILLAILLALTQRYS) threads the bilayer. Topologically, residues 25–321 (RTKDHLQKMY…IKVAWQPRIT (297 aa)) are lumenal. Asn87 and Asn99 each carry an N-linked (GlcNAc...) asparagine glycan. Residues 95-100 (FATGNF), 187-189 (TAN), and 209-212 (HAWW) contribute to the substrate site. Glu277 acts as the Nucleophile in catalysis.

The protein belongs to the glycosyltransferase 6 family. Mn(2+) serves as cofactor.

It localises to the golgi apparatus. Its subcellular location is the golgi stack membrane. It catalyses the reaction a beta-D-galactosyl-(1-&gt;4)-N-acetyl-beta-D-glucosaminyl derivative + UDP-alpha-D-galactose = an alpha-D-galactosyl-(1-&gt;3)-beta-D-galactosyl-(1-&gt;4)-N-acetyl-beta-D-glucosaminyl derivative + UDP + H(+). Its pathway is protein modification; protein glycosylation. In terms of biological role, synthesizes the galactose-alpha(1,3)-galactose group by catalyzing the transfer of a galactose residue, with an alpha-1,3 linkage, on terminal lactosaminide (Gal-beta-1,4-GlcNAc-R) disaccharide borne by a glycoprotein or a glycolipid. The chain is N-acetyllactosaminide alpha-1,3-galactosyltransferase-like 1 (Ggta1l1) from Rattus norvegicus (Rat).